The chain runs to 824 residues: Glycophorin-binding protein 130 (824 aa).

Residues 84-88 (RILAE) carry the PEXEL motif motif. Disordered stretches follow at residues 97–236 (EKTT…GQIM), 258–291 (NTDP…EYAS), 310–334 (DPND…PEGQ), 358–384 (NTDP…PEGQ), 408–431 (NTDP…SDPE), 457–482 (NTDP…DPEG), 507–532 (NTDP…DPEG), 559–582 (DPND…DPEG), 659–683 (DPND…PEGQ), 711–733 (NDEV…PEGQ), and 759–783 (DPND…PEGQ). Basic and acidic residues-rich tracts occupy residues 117 to 140 (TKKD…SEKQ) and 174 to 198 (KKEE…EPKA). Residues 200 to 228 (KVSQKPSTSTRSNNEVKIRAASNQETLTS) show a composition bias toward polar residues. GBP repeat units lie at residues 226–275 (LTSA…NKED), 276–325 (LTSA…NKED), 326–375 (LTSA…NKED), 376–424 (LTSA…DNKE), 425–474 (LTSS…NKED), 475–524 (LTSA…NKED), 525–574 (LTSA…NKED), 575–624 (LTSA…NKEE), 625–674 (LTSS…NKED), 675–724 (LTSA…NKED), 725–774 (LTSA…NKED), and 775–824 (LTSA…NNEA). Composition is skewed to basic and acidic residues over residues 264–276 (EVER…KEDL), 314–326 (DVER…KEDL), 364–376 (EVER…KEDL), 414–426 (EVER…KELT), 463–475 (EVER…KEDL), 513–525 (EVER…KEDL), 563–575 (EVER…KEDL), 663–675 (EVER…KEDL), 713–725 (EVER…KEDL), and 763–775 (DVER…KEDL).

Interacts with host glycophorin.

It localises to the secreted. Its subcellular location is the cell surface. The protein localises to the host cytoplasm. Its function is as follows. Involved in merozoite invasion of host erythrocytes. This Plasmodium falciparum (isolate 3D7) protein is Glycophorin-binding protein 130.